Here is a 672-residue protein sequence, read N- to C-terminus: Poly-beta-1,6-N-acetyl-D-glucosamine N-deacetylase (672 aa).

Positions 1–20 are cleaved as a signal peptide; sequence MLRNGNKYLLMLVSIIMLTA. Cys-21 is lipidated: N-palmitoyl cysteine. Residue Cys-21 is the site of S-diacylglycerol cysteine attachment. Residues 107-349 enclose the NodB homology domain; that stretch reads KAVVLTFDDG…IQRVKDMQIS (243 aa).

It belongs to the polysaccharide deacetylase family.

It is found in the cell outer membrane. Functionally, catalyzes the N-deacetylation of poly-beta-1,6-N-acetyl-D-glucosamine (PGA), a biofilm adhesin polysaccharide. N-deacetylation promotes PGA export through the PgaA porin. The protein is Poly-beta-1,6-N-acetyl-D-glucosamine N-deacetylase (pgaB) of Escherichia coli (strain K12).